The sequence spans 551 residues: MLDKSVLYNVSEKPGVYIFKNGSEYIYIGKAKNLKRRLNSHFSLKEEKSRLIVEESNSLEVIIVKNEKEALLLEATLIFKHKPKYNIMLKEGERYPYIRISDDEYPYVEVTRSRKSSGIFFGPFTNITFTRLLLEILQKIFGVRTCKKDLSKIKKPCIEYHLKTCLAPCKFENKNIYMSAINNLKKVLSGDFEFVKDYIEQKMNYHSKMLDFENAAKYRDLLLSFEKLLNTQGVILNDKRCVDYIAYSKKVFLVLKVRGGVLLSKLFYEANLSFEEFLYQFYYGMKSDLPTKIVTFESSNLNKIEFDIPINVSLDDSDRYLLEIAYENLKEHFKAKRLRRDTLKKIKEILGLKKIPYRIEGTDISHRNGKFTVASLVVFENGVPKPEEYRRYKLGDILDDFESIRMFIRKRYTKHEAPDLIFVDGGRGQVNAAIEAFNELGLDVDVVGIAKKEEIIVTKNKEFKLKENDEVLRTLISIRDETHRVANSFSGSLKLKNYTLSKLDDIPGIGPKRKKILLKKYKSIENIKNAPLEELSKIVGNKIALRLKEYL.

The region spanning 12–87 (EKPGVYIFKN…IFKHKPKYNI (76 aa)) is the GIY-YIG domain. Residues 193 to 228 (EFVKDYIEQKMNYHSKMLDFENAAKYRDLLLSFEKL) enclose the UVR domain.

The protein belongs to the UvrC family. Interacts with UvrB in an incision complex.

It is found in the cytoplasm. The UvrABC repair system catalyzes the recognition and processing of DNA lesions. UvrC both incises the 5' and 3' sides of the lesion. The N-terminal half is responsible for the 3' incision and the C-terminal half is responsible for the 5' incision. The polypeptide is UvrABC system protein C (Thermosipho africanus (strain TCF52B)).